The following is a 407-amino-acid chain: Imidazolonepropionase (407 aa).

Fe(3+) is bound by residues His-74 and His-76. 2 residues coordinate Zn(2+): His-74 and His-76. Residues Arg-83, Tyr-146, and His-179 each coordinate 4-imidazolone-5-propanoate. Tyr-146 is an N-formimidoyl-L-glutamate binding site. Position 244 (His-244) interacts with Fe(3+). Residue His-244 participates in Zn(2+) binding. Gln-247 provides a ligand contact to 4-imidazolone-5-propanoate. Asp-319 contributes to the Fe(3+) binding site. Asp-319 provides a ligand contact to Zn(2+). N-formimidoyl-L-glutamate contacts are provided by Asn-321 and Gly-323. Residue Thr-324 coordinates 4-imidazolone-5-propanoate.

Belongs to the metallo-dependent hydrolases superfamily. HutI family. The cofactor is Zn(2+). Requires Fe(3+) as cofactor.

It localises to the cytoplasm. The enzyme catalyses 4-imidazolone-5-propanoate + H2O = N-formimidoyl-L-glutamate. It participates in amino-acid degradation; L-histidine degradation into L-glutamate; N-formimidoyl-L-glutamate from L-histidine: step 3/3. In terms of biological role, catalyzes the hydrolytic cleavage of the carbon-nitrogen bond in imidazolone-5-propanoate to yield N-formimidoyl-L-glutamate. It is the third step in the universal histidine degradation pathway. The chain is Imidazolonepropionase from Salmonella agona (strain SL483).